Here is a 1092-residue protein sequence, read N- to C-terminus: Elongation factor 3 (1092 aa).

Residue Val92 participates in ADP binding. HEAT repeat units lie at residues Met95–Ser133, Pro138–Pro175, Ala177–Arg214, Thr218–Asn255, Asp257–Pro293, Pro294–Lys331, and Gln333–Thr370. Glu454 is a binding site for ADP. 2 consecutive ABC transporter domains span residues Glu486–Leu704 and Leu730–Lys1044. The ADP site is built by Asn766, Glu973, Asn976, and His1002. Disordered regions lie at residues Thr1023 to Lys1044 and Ser1063 to Glu1092. Basic residues predominate over residues Ser1063–Lys1075. Positions Glu1076 to Glu1086 are enriched in basic and acidic residues.

It belongs to the ABC transporter superfamily. ABCF family. EF3 subfamily.

The protein localises to the cytoplasm. It is found in the cytosol. It catalyses the reaction ATP + H2O = ADP + phosphate + H(+). It participates in protein biosynthesis; polypeptide chain elongation. Functionally, ribosome-dependent ATPase that functions in cytoplasmic translation elongation. Required for the ATP-dependent release of deacylated tRNA from the ribosomal E-site during protein biosynthesis. Stimulates the eEF1A-dependent binding of aminoacyl-tRNA to the ribosomal A-site, which has reduced affinity for tRNA as long as the E-site is occupied. Assists translation termination by stimulating the release of nascent protein from the ribosome by release factors. The sequence is that of Elongation factor 3 from Gonapodya prolifera (strain JEL478) (Monoblepharis prolifera).